We begin with the raw amino-acid sequence, 85 residues long: U1-ctenitoxin-Pn1a (85 aa).

A signal peptide spans 1–16 (MKVAIVFLSLLVLAFA). Positions 17-34 (SESIEENREEFPVEESAR) are excised as a propeptide. 5 cysteine pairs are disulfide-bonded: C35–C49, C42–C55, C46–C81, C48–C65, and C57–C63. Residues 82–85 (QNKI) constitute a propeptide that is removed on maturation.

Belongs to the neurotoxin 03 (Tx2) family. 05 subfamily. As to expression, expressed by the venom gland.

It is found in the secreted. In terms of biological role, insecticidal neurotoxin that reversibly inhibits the N-methyl-D-aspartate (NMDA)-subtype of ionotropic glutamate receptor (GRIN) and inhibits inactivation of insect sodium channels (Nav). In vivo, is highly toxic to insects. This Phoneutria nigriventer (Brazilian armed spider) protein is U1-ctenitoxin-Pn1a.